The sequence spans 129 residues: MPMNRREMVMATTGAALAAAAAVPLLSGGEGEGAAEAAAAPAKATGRGREHTERYLGRSIRVAAPADGGGVFIDGRPLHIMKFADDAYLSSMCHYEMAPTPLHAARRAVEELRGAALQPSTHGTHVTHL.

The segment at residues 1 to 37 is a signal peptide (tat-type signal); sequence MPMNRREMVMATTGAALAAAAAVPLLSGGEGEGAAEA. Residues 32–51 form a disordered region; sequence EGAAEAAAAPAKATGRGREH. The span at 34-45 shows a compositional bias: low complexity; the sequence is AAEAAAAPAKAT.

The protein belongs to the melC1 family. In terms of processing, predicted to be exported by the Tat system. The position of the signal peptide cleavage has not been experimentally proven.

Functionally, involved in the transfer of Cu(2+) ions to the apo form of o-aminophenol oxidase GriF in the grixazone biosynthetic pathway. This Streptomyces griseus subsp. griseus (strain JCM 4626 / CBS 651.72 / NBRC 13350 / KCC S-0626 / ISP 5235) protein is Copper chaperone GriE (griE).